The primary structure comprises 258 residues: MLQITPLPAFNDNYIWVFQSQQSSGVYVVDPGDGQVVTDYLTQTNLPLLGILITHHHHDHTGGIEQLLKLFGEDTPVYGPQVENIAGVNRPISTNGNITLENIGLNTTVIQVPGHTSGHICYLIEDALFCGDTLFSGGCGRLFEGTAEQMYQSLTQLSLLPDNTRVFCAHEYTLANLHFAKAVEANNPALIEYTVKAHALRAENKPTLPSSIALEKAINPFLRLDSLEIQKSLAVQFQQPIADPVQSFALLRQWKDNF.

The Zn(2+) site is built by H55, H57, D59, H60, H115, D132, and H170.

This sequence belongs to the metallo-beta-lactamase superfamily. Glyoxalase II family. In terms of assembly, monomer. Zn(2+) serves as cofactor.

The catalysed reaction is an S-(2-hydroxyacyl)glutathione + H2O = a 2-hydroxy carboxylate + glutathione + H(+). Its pathway is secondary metabolite metabolism; methylglyoxal degradation; (R)-lactate from methylglyoxal: step 2/2. Thiolesterase that catalyzes the hydrolysis of S-D-lactoyl-glutathione to form glutathione and D-lactic acid. This Shewanella halifaxensis (strain HAW-EB4) protein is Hydroxyacylglutathione hydrolase.